A 245-amino-acid chain; its full sequence is Ubiquinone biosynthesis O-methyltransferase (245 aa).

Residues arginine 44, glycine 64, aspartate 85, and methionine 129 each coordinate S-adenosyl-L-methionine.

It belongs to the methyltransferase superfamily. UbiG/COQ3 family.

It catalyses the reaction a 3-demethylubiquinol + S-adenosyl-L-methionine = a ubiquinol + S-adenosyl-L-homocysteine + H(+). The catalysed reaction is a 3-(all-trans-polyprenyl)benzene-1,2-diol + S-adenosyl-L-methionine = a 2-methoxy-6-(all-trans-polyprenyl)phenol + S-adenosyl-L-homocysteine + H(+). It participates in cofactor biosynthesis; ubiquinone biosynthesis. Its function is as follows. O-methyltransferase that catalyzes the 2 O-methylation steps in the ubiquinone biosynthetic pathway. The protein is Ubiquinone biosynthesis O-methyltransferase of Proteus mirabilis (strain HI4320).